Reading from the N-terminus, the 231-residue chain is Ion-translocating oxidoreductase complex subunit E (231 aa).

6 helical membrane passes run 18-38, 39-59, 69-89, 93-113, 128-148, and 182-202; these read GLVQ…VTNA, LGLG…VSLV, IPVF…LINA, GLYL…VIIG, AFDG…LGAG, and PFLL…LIAG.

This sequence belongs to the NqrDE/RnfAE family. As to quaternary structure, the complex is composed of six subunits: RnfA, RnfB, RnfC, RnfD, RnfE and RnfG.

The protein resides in the cell inner membrane. Its function is as follows. Part of a membrane-bound complex that couples electron transfer with translocation of ions across the membrane. The protein is Ion-translocating oxidoreductase complex subunit E of Shewanella denitrificans (strain OS217 / ATCC BAA-1090 / DSM 15013).